We begin with the raw amino-acid sequence, 510 residues long: Photosystem II CP47 reaction center protein (510 aa).

At 2-16 the chain is on the cytoplasmic side; sequence GLPWYRVHTVLINDP. A helical membrane pass occupies residues 17–37; sequence GRLIAAHLMHTALVAGWAGSM. Over 38-94 the chain is Lumenal; that stretch reads ALYELATFDPSDPVLNPMWRQGMFVLPFMARLGVTGSWSGWSITGETGIDPGFWSFE. A helical transmembrane segment spans residues 95 to 116; that stretch reads GVALAHIVLSGLLFLAACWHWV. Residues 117–134 lie on the Cytoplasmic side of the membrane; that stretch reads YWDLELFRDPRTGEPALD. Residues 135 to 157 traverse the membrane as a helical segment; it reads LPKMFGIHLFLAGLLCFGFGAFH. The Lumenal segment spans residues 158–196; it reads LTGLFGPGMWVSDPYGLTGSVQPVAPEWGPDGFNPYNPG. A helical membrane pass occupies residues 197–218; sequence GVVAHHIAAGIVGIIAGLFHIL. At 219–233 the chain is on the cytoplasmic side; sequence VRPPQRLYKALRMGN. The chain crosses the membrane as a helical span at residues 234–254; sequence IETVLSSSIAAVFFAAFVVAG. Residues 255-450 are Lumenal-facing; it reads TMWYGSATTP…GIFRTSPRGW (196 aa). The chain crosses the membrane as a helical span at residues 451–473; that stretch reads FTFAHAVFALLFFFGHIWHGART. The Cytoplasmic portion of the chain corresponds to 474–510; the sequence is LFRDVFSGIDPELSPEQVEWGFYQKVGDVTTRRKEAV.

In terms of assembly, PSII is composed of 1 copy each of membrane proteins PsbA, PsbB, PsbC, PsbD, PsbE, PsbF, PsbH, PsbI, PsbJ, PsbK, PsbL, PsbM, PsbT, PsbX, PsbY, PsbZ, Psb30/Ycf12, peripheral proteins PsbO, CyanoQ (PsbQ), PsbU, PsbV and a large number of cofactors. It forms dimeric complexes. Part of a photosystem II (PSII) assembly intermediate complex PSII-I; crystallized from a strain deleted of psbJ, it forms monomeric PSII before addition of the oxygen evolving complex. PSII-I includes 3 assembly factors not found in mature PSII (Psb27, Psb28 and Psb34). Requires Binds multiple chlorophylls. PSII binds additional chlorophylls, carotenoids and specific lipids. as cofactor.

Its subcellular location is the cellular thylakoid membrane. Its function is as follows. One of the components of the core complex of photosystem II (PSII). It binds chlorophyll and helps catalyze the primary light-induced photochemical processes of PSII. PSII is a light-driven water:plastoquinone oxidoreductase, using light energy to abstract electrons from H(2)O, generating O(2) and a proton gradient subsequently used for ATP formation. This is Photosystem II CP47 reaction center protein from Thermosynechococcus vestitus (strain NIES-2133 / IAM M-273 / BP-1).